The following is a 406-amino-acid chain: Argininosuccinate synthase (406 aa).

Residues 12 to 20 (AYSGGLDTS) and Ala-39 each bind ATP. 2 residues coordinate L-citrulline: Tyr-90 and Ser-95. Gly-120 is an ATP binding site. Thr-122, Asn-126, and Asp-127 together coordinate L-aspartate. Asn-126 lines the L-citrulline pocket. 5 residues coordinate L-citrulline: Arg-130, Ser-179, Ser-188, Glu-264, and Tyr-276.

The protein belongs to the argininosuccinate synthase family. Type 1 subfamily. As to quaternary structure, homotetramer.

It localises to the cytoplasm. The enzyme catalyses L-citrulline + L-aspartate + ATP = 2-(N(omega)-L-arginino)succinate + AMP + diphosphate + H(+). It participates in amino-acid biosynthesis; L-arginine biosynthesis; L-arginine from L-ornithine and carbamoyl phosphate: step 2/3. This Geotalea daltonii (strain DSM 22248 / JCM 15807 / FRC-32) (Geobacter daltonii) protein is Argininosuccinate synthase.